The primary structure comprises 174 residues: MIRKFLLIILAIFTLWVGGFGYYLYLINSYKLNSNTTNAIIVFADGGHKIETCMALLKAGYAPILFITGIESTERFKNLLMKHNVIEQQVILAPNKIMSEEDNIKEAINFIVTYNLTLITLVEHNYNIPFMLNKLQKAIPSSNNVYIVPYPVFSKPKYDVLLKSYHRYLMSIVN.

A helical transmembrane segment spans residues leucine 7–isoleucine 27.

The protein resides in the membrane. This is an uncharacterized protein from Rickettsia prowazekii (strain Madrid E).